A 312-amino-acid polypeptide reads, in one-letter code: Glycine--tRNA ligase alpha subunit (312 aa).

The protein belongs to the class-II aminoacyl-tRNA synthetase family. As to quaternary structure, tetramer of two alpha and two beta subunits.

The protein localises to the cytoplasm. The enzyme catalyses tRNA(Gly) + glycine + ATP = glycyl-tRNA(Gly) + AMP + diphosphate. The sequence is that of Glycine--tRNA ligase alpha subunit (glyQ) from Buchnera aphidicola subsp. Acyrthosiphon pisum (strain APS) (Acyrthosiphon pisum symbiotic bacterium).